Consider the following 617-residue polypeptide: Tetratricopeptide repeat protein 39B (617 aa).

TPR repeat units lie at residues 328–361 (SLILFYHARIELLKGNAEKAQETFRKCISVQEEW) and 561–594 (PFTLFELAFLYKSQGEIDKAIKVLETARNNYKDY).

This sequence belongs to the TTC39 family.

Functionally, regulates high density lipoprotein (HDL) cholesterol metabolism by promoting the ubiquitination and degradation of the oxysterols receptors LXR (NR1H2 and NR1H3). In Rattus norvegicus (Rat), this protein is Tetratricopeptide repeat protein 39B (Ttc39b).